The following is a 257-amino-acid chain: Folate receptor alpha (257 aa).

The N-terminal stretch at 1 to 24 (MAQRMTTQLLLLLVWVAVVGEAQT) is a signal peptide. 8 disulfide bridges follow: cysteine 37–cysteine 65, cysteine 57–cysteine 105, cysteine 66–cysteine 109, cysteine 89–cysteine 175, cysteine 96–cysteine 146, cysteine 135–cysteine 209, cysteine 139–cysteine 189, and cysteine 152–cysteine 169. N-linked (GlcNAc...) asparagine glycosylation is present at asparagine 69. Folate contacts are provided by residues aspartate 103, tyrosine 107, 124–128 (WRKER), 157–162 (HKGWNW), and serine 196. N-linked (GlcNAc...) asparagine glycosylation is present at asparagine 161. Asparagine 201 carries N-linked (GlcNAc...) asparagine glycosylation. Serine 234 carries the GPI-anchor amidated serine lipid modification. Positions 235 to 257 (GAGPWAAWPFLLSLALMLLWLLS) are cleaved as a propeptide — removed in mature form.

This sequence belongs to the folate receptor family. In terms of processing, the secreted form is derived from the membrane-bound form either by cleavage of the GPI anchor, or/and by proteolysis catalyzed by a metalloprotease. As to expression, primarily expressed in tissues of epithelial origin. Expression is increased in malignant tissues. Expressed in kidney, lung and cerebellum. Detected in placenta and thymus epithelium.

The protein localises to the cell membrane. It is found in the apical cell membrane. It localises to the basolateral cell membrane. Its subcellular location is the secreted. The protein resides in the cytoplasmic vesicle. The protein localises to the clathrin-coated vesicle. It is found in the endosome. In terms of biological role, binds to folate and reduced folic acid derivatives and mediates delivery of 5-methyltetrahydrofolate and folate analogs into the interior of cells. Has high affinity for folate and folic acid analogs at neutral pH. Exposure to slightly acidic pH after receptor endocytosis triggers a conformation change that strongly reduces its affinity for folates and mediates their release. Required for normal embryonic development and normal cell proliferation. This Homo sapiens (Human) protein is Folate receptor alpha (FOLR1).